We begin with the raw amino-acid sequence, 239 residues long: mRNA turnover protein 4 homolog (239 aa).

The disordered stretch occupies residues 215 to 239 (FQQMGDDLPESASESTEESDSEDDD). Phosphoserine occurs at positions 225, 229, and 233. Residues 229 to 239 (STEESDSEDDD) are compositionally biased toward acidic residues.

Belongs to the universal ribosomal protein uL10 family. Associates with the pre-60S ribosomal particle. Interacts with MINAS-60 (product of an alternative open reading frame of RBM10).

The protein resides in the nucleus. The protein localises to the nucleolus. It localises to the cytoplasm. Its function is as follows. Component of the ribosome assembly machinery. Nuclear paralog of the ribosomal protein P0, it binds pre-60S subunits at an early stage of assembly in the nucleolus, and is replaced by P0 in cytoplasmic pre-60S subunits and mature 80S ribosomes. The chain is mRNA turnover protein 4 homolog (MRTO4) from Homo sapiens (Human).